The following is an 802-amino-acid chain: MSEQSICQARAAVMVYDDANKKWVPAGGSTGFSRVHIYHHTGNNTFRVVGRKIQDHQVVINCAIPKGLKYNQATQTFHQWRDARQVYGLNFGSKEDANVFASAMMHALEVLNSQEAAQSKVTATQDSTNLRCIFCGPTLPRQNSQLPAQVQNGPSQEELEIQRRQLQEQQRQKELERERMERERLERERLERERLERERLEQEQLERQRQEREHVERLERERLERLERERQERERERLEQLEREQVEWERERRMSNAAPSSDSSLSSAPLPEYSSCQPPSAPPPSYAKVISAPVSDATPDYAVVTALPPTSTPPTPPLRHAATRFATSLGSAFHPVLPHYATVPRPLNKNSRPSSPVNTPSSQPPAAKSCAWPTSNFSPLPPSPPIMISSPPGKATGPRPVLPVCVSSPVPQMPPSPTAPNGSLDSVTYPVSPPPTSGPAAPPPPPPPPPPPPPPPLPPPPLPPLASLSHCGSQASPPPGTPLASTPSSKPSVLPSPSAGAPASAETPLNPELGDSSASEPGLQAASQPAESPTPQGLVLGPPAPPPPPPLPSGPAYASALPPPPGPPPPPPLPSTGPPPPPPPPPPLPNQAPPPPPPPPAPPLPASGIFSGSTSEDNRPLTGLAAAIAGAKLRKVSRVEDGSFPGGGNTGSVSLASSKADAGRGNGPLPLGGSGLMEEMSALLARRRRIAEKGSTIETEQKEDRNEDAEPITAKAPSTSTPEPTRKPWERTNTMNGSKSPVISRPKSTPSSQPSANGVQTEGLDYDRLKQDILDEMRKELAKLKEELIDAIRQELSKSNTA.

A WH1 domain is found at M1–L111. Positions N143–S155 are enriched in polar residues. The tract at residues N143–L166 is disordered. Residue S144 is modified to Phosphoserine. Residues P154–A258 are a coiled coil. 7 consecutive repeat copies span residues L175–R179, M180–R184, L185–R189, L190–R194, L195–R199, L200–Q204, and L205–R209. A 7 X 5 AA tandem repeats of [LM]-E-[QR]-[EQ]-[QR] region spans residues L175–R209. Residues Q245–M254 are compositionally biased toward basic and acidic residues. Disordered regions lie at residues Q245 to A287 and A341 to T622. A Phosphoserine; by PKA modification is found at S255. The span at S255–P278 shows a compositional bias: low complexity. Over residues N348–S361 the composition is skewed to polar residues. S383 carries the post-translational modification Phosphoserine. The span at I386–V410 shows a compositional bias: low complexity. Residues V431–P464 show a composition bias toward pro residues. The span at S485 to A505 shows a compositional bias: low complexity. The segment covering A525–P535 has biased composition (polar residues). The span at P542–S553 shows a compositional bias: pro residues. Residue Y557 is modified to Phosphotyrosine. Over residues L561–P605 the composition is skewed to pro residues. The segment at G623 to S643 is EVH2 block A. The tract at residues G623–S799 is EVH2. The KLKR signature appears at K632 to K635. 2 disordered regions span residues V639–G675 and A691–L764. The span at R664–G675 shows a compositional bias: gly residues. The segment at S674–A691 is EVH2 block B. The segment covering R731–Q760 has biased composition (polar residues). A phosphoserine mark is found at S738 and S740. The segment at D765–S799 is EVH2 block C. Residues D767–S797 adopt a coiled-coil conformation.

This sequence belongs to the Ena/VASP family. As to quaternary structure, homotetramer. Interacts with APBB1IP, APBB1, PFN1 and ROBO4. Isoforms, containing the polyproline-rich regions with PPLP motifs, bind the WW domain of APBB1IP. Isoforms, containing the PPSY motif, bind, in vitro, to the WW2 and WW3 domains of NEDD4 and to the WW1 domain of YAP1. Binds the SH3 domain of BAIAP2-alpha but only after the autoinhibitory region of BAIAP2-alpha has been blocked by interaction with CDC42. Interacts, via the EVH1/WH1 domain, with the Pro-rich domains from VCL, ZYX and Listeria monocytogenes actA and with TES (via LIM domain). The TES LIM domain and the Pro-rich domains from VCL or ZYX compete for the same binding site. Interaction with ZYX is important for targeting ENAH to focal adhesions and enhances production of actin-rich structures at the apical surface of cells. Binds GPHN. Heterotrimer with TES and ACTL7A. Interacts with FAT1 (via EVH1 domains). Interacts, through the Pro-rich region, with the C-terminal SH3 domain of DNMPB. Interacts with PRPF40A. NTN1-induced PKA phosphorylation on Ser-255 directly parallels the formation of filopodial protrusions. As to expression, expressed in heart and testis, lower levels in lung, skeletal muscle, kidney, pancreas and brain. Isoform 5 is expressed exclusively in the brain. Isoform 2 is expressed predominantly in brain, testis, ovary and fat. In the brain, isoforms 2 and 5 are expressed at highest levels in the hippocampus, cortex and midbrain, and at lowest levels in the striatum and cerebellum. Isoform 6 is expressed in brain and spleen.

It localises to the cytoplasm. The protein localises to the cytoskeleton. The protein resides in the cell projection. Its subcellular location is the lamellipodium. It is found in the filopodium. It localises to the synapse. The protein localises to the cell junction. The protein resides in the focal adhesion. In terms of biological role, ena/VASP proteins are actin-associated proteins involved in a range of processes dependent on cytoskeleton remodeling and cell polarity such as axon guidance and lamellipodial and filopodial dynamics in migrating cells. ENAH induces the formation of F-actin rich outgrowths in fibroblasts. Acts synergistically with BAIAP2-alpha and downstream of NTN1 to promote filipodia formation. This Mus musculus (Mouse) protein is Protein enabled homolog (Enah).